The sequence spans 146 residues: Gene 19.2 protein (146 aa).

In Escherichia coli (Bacteriophage T3), this protein is Gene 19.2 protein (19.2).